Here is a 112-residue protein sequence, read N- to C-terminus: Osmotically-inducible putative lipoprotein OsmE (112 aa).

The first 20 residues, 1–20 (MNKNMAGILSAAAVLTMLAG), serve as a signal peptide directing secretion. The N-palmitoyl cysteine moiety is linked to residue Cys21. Cys21 carries S-diacylglycerol cysteine lipidation.

Its subcellular location is the cell inner membrane. The chain is Osmotically-inducible putative lipoprotein OsmE (osmE) from Escherichia coli O157:H7.